The primary structure comprises 77 residues: Neurexophilin-4 (77 aa).

A v (Cys-rich) region spans residues 1-77 (NCHVEYEKTN…NFQSEHPYFG (77 aa)).

This sequence belongs to the neurexophilin family. May be proteolytically processed at the boundary between the N-terminal non-conserved and the central conserved domain in neuron-like cells.

It is found in the secreted. May be signaling molecules that resemble neuropeptides and that act by binding to alpha-neurexins and possibly other receptors. The protein is Neurexophilin-4 (NXPH4) of Macaca mulatta (Rhesus macaque).